The chain runs to 416 residues: Enolase (416 aa).

Position 162 (Gln162) interacts with (2R)-2-phosphoglycerate. The active-site Proton donor is Glu204. Residues Asp241, Glu282, and Asp309 each contribute to the Mg(2+) site. (2R)-2-phosphoglycerate is bound by residues Lys334, Arg363, Ser364, and Lys385. Lys334 acts as the Proton acceptor in catalysis.

It belongs to the enolase family. Mg(2+) serves as cofactor.

It localises to the cytoplasm. It is found in the secreted. Its subcellular location is the cell surface. The catalysed reaction is (2R)-2-phosphoglycerate = phosphoenolpyruvate + H2O. Its pathway is carbohydrate degradation; glycolysis; pyruvate from D-glyceraldehyde 3-phosphate: step 4/5. Functionally, catalyzes the reversible conversion of 2-phosphoglycerate (2-PG) into phosphoenolpyruvate (PEP). It is essential for the degradation of carbohydrates via glycolysis. This Campylobacter concisus (strain 13826) protein is Enolase.